The chain runs to 391 residues: 3-ketoacyl-CoA thiolase (391 aa).

Residue Cys95 is the Acyl-thioester intermediate of the active site. Active-site proton acceptor residues include His347 and Cys377.

Belongs to the thiolase-like superfamily. Thiolase family. In terms of assembly, heterotetramer of two alpha chains (FadB) and two beta chains (FadA).

Its subcellular location is the cytoplasm. The catalysed reaction is an acyl-CoA + acetyl-CoA = a 3-oxoacyl-CoA + CoA. It participates in lipid metabolism; fatty acid beta-oxidation. Catalyzes the final step of fatty acid oxidation in which acetyl-CoA is released and the CoA ester of a fatty acid two carbons shorter is formed. The polypeptide is 3-ketoacyl-CoA thiolase (Stutzerimonas stutzeri (strain A1501) (Pseudomonas stutzeri)).